The chain runs to 453 residues: tRNA modification GTPase MnmE (453 aa).

(6S)-5-formyl-5,6,7,8-tetrahydrofolate is bound by residues arginine 22, glutamate 79, and lysine 119. A TrmE-type G domain is found at 215–376 (GMKVVIAGRP…LKQHLKSLMG (162 aa)). Asparagine 225 contacts K(+). Residues 225–230 (NAGKSS), 244–250 (TEIAGTT), 269–272 (DTAG), and 334–337 (NKAD) contribute to the GTP site. Residue serine 229 coordinates Mg(2+). The K(+) site is built by threonine 244, isoleucine 246, and threonine 249. Position 250 (threonine 250) interacts with Mg(2+). Lysine 453 contacts (6S)-5-formyl-5,6,7,8-tetrahydrofolate.

This sequence belongs to the TRAFAC class TrmE-Era-EngA-EngB-Septin-like GTPase superfamily. TrmE GTPase family. Homodimer. Heterotetramer of two MnmE and two MnmG subunits. It depends on K(+) as a cofactor.

Its subcellular location is the cytoplasm. In terms of biological role, exhibits a very high intrinsic GTPase hydrolysis rate. Involved in the addition of a carboxymethylaminomethyl (cmnm) group at the wobble position (U34) of certain tRNAs, forming tRNA-cmnm(5)s(2)U34. This is tRNA modification GTPase MnmE from Shewanella baltica (strain OS185).